The sequence spans 274 residues: 16S rRNA (guanine(1405)-N(7))-methyltransferase (274 aa).

S-adenosyl-L-methionine is bound by residues 102–108, Ala-133, Asp-156, 182–183, Leu-198, and Gln-207; these read HISTRER and DL.

It belongs to the methyltransferase superfamily. Aminoglycoside resistance family.

It carries out the reaction guanosine(1405) in 16S rRNA + S-adenosyl-L-methionine = N(7)-methylguanosine(1405) in 16S rRNA + S-adenosyl-L-homocysteine. Its function is as follows. Specifically methylates the N(7) position of guanine 1405 in 16S rRNA. Confers resistance to various aminoglycosides, including gentamicin, kanamycin and sisomicin. The polypeptide is 16S rRNA (guanine(1405)-N(7))-methyltransferase (sgm) (Micromonospora zionensis).